Here is a 632-residue protein sequence, read N- to C-terminus: PAN2-PAN3 deadenylation complex subunit PAN3 (632 aa).

2 disordered regions span residues 1–22 (MQPGEGYHYDSGPNNAVHPHQL) and 99–127 (PTFGPGQHMNHRASHHHQSPQMAQQPPTL). The segment covering 107–116 (MNHRASHHHQ) has biased composition (basic residues). The span at 117–127 (SPQMAQQPPTL) shows a compositional bias: polar residues. The segment at 223–494 (KADSAIIGDI…TINEIMPMIG (272 aa)) is pseudokinase domain. Residues Arg270, 321–328 (DYYPLAGT), and 397–398 (NK) contribute to the ATP site. Residues 495–533 (GRFFTVMENMQAKTDVLEAELSREMENGRLFRLVAKMNT) are a coiled coil. A knob domain region spans residues 534-632 (VLERVEHGTD…LLGTNMMLHR (99 aa)).

It belongs to the protein kinase superfamily. PAN3 family. In terms of assembly, homodimer. Forms a heterotrimer with a catalytic subunit PAN2 to form the poly(A)-nuclease (PAN) deadenylation complex. Interacts (via PAM-2 motif) with poly(A)-binding protein (via PABC domain), conferring substrate specificity of the enzyme complex. Interacts with the GW182 family protein ain-1. As to expression, highly expressed in germ cells.

It is found in the cytoplasm. The protein resides in the P-body. Regulatory subunit of the poly(A)-nuclease (PAN) deadenylation complex, one of two cytoplasmic mRNA deadenylases involved in general and miRNA-mediated mRNA turnover. PAN specifically shortens poly(A) tails of RNA and the activity is stimulated by poly(A)-binding protein (PABP). PAN deadenylation is followed by rapid degradation of the shortened mRNA tails by the CCR4-NOT complex. Deadenylated mRNAs are then degraded by two alternative mechanisms, namely exosome-mediated 3'-5' exonucleolytic degradation, or deadenylation-dependent mRNA decaping and subsequent 5'-3' exonucleolytic degradation by XRN1. PAN3 acts as a positive regulator for PAN activity, recruiting the catalytic subunit PAN2 to mRNA via its interaction with RNA and PABP, and to miRNA targets via its interaction with GW182 family proteins. Within the PAN complex, may positively regulate fertility. The polypeptide is PAN2-PAN3 deadenylation complex subunit PAN3 (Caenorhabditis elegans).